The primary structure comprises 449 residues: CCA-adding enzyme (449 aa).

The ATP site is built by S57 and R60. CTP-binding residues include S57 and R60. 3 residues coordinate Mg(2+): D69, D71, and D124. ATP is bound by residues H147, K167, and Y176. Residues H147, K167, and Y176 each coordinate CTP.

This sequence belongs to the tRNA nucleotidyltransferase/poly(A) polymerase family. Archaeal CCA-adding enzyme subfamily. Homodimer. It depends on Mg(2+) as a cofactor.

The enzyme catalyses a tRNA precursor + 2 CTP + ATP = a tRNA with a 3' CCA end + 3 diphosphate. It carries out the reaction a tRNA with a 3' CCA end + 2 CTP + ATP = a tRNA with a 3' CCACCA end + 3 diphosphate. Functionally, catalyzes the addition and repair of the essential 3'-terminal CCA sequence in tRNAs without using a nucleic acid template. Adds these three nucleotides in the order of C, C, and A to the tRNA nucleotide-73, using CTP and ATP as substrates and producing inorganic pyrophosphate. tRNA 3'-terminal CCA addition is required both for tRNA processing and repair. Also involved in tRNA surveillance by mediating tandem CCA addition to generate a CCACCA at the 3' terminus of unstable tRNAs. While stable tRNAs receive only 3'-terminal CCA, unstable tRNAs are marked with CCACCA and rapidly degraded. The polypeptide is CCA-adding enzyme (Methanocaldococcus jannaschii (strain ATCC 43067 / DSM 2661 / JAL-1 / JCM 10045 / NBRC 100440) (Methanococcus jannaschii)).